A 111-amino-acid chain; its full sequence is MIQVLLVTICLAVFPYQGSSIILESGNVNDYEVVYPRKITPLPKGAVQPKNPCCDAATCKLTPGSQCAEGLCCDQCKFIKAGKICRRARGDNPDYRCTGQSGDCPRKHFYA.

The first 20 residues, 1-20, serve as a signal peptide directing secretion; that stretch reads MIQVLLVTICLAVFPYQGSS. Positions 21–44 are excised as a propeptide; sequence IILESGNVNDYEVVYPRKITPLPK. Residues 45 to 111 enclose the Disintegrin domain; sequence GAVQPKNPCC…GDCPRKHFYA (67 aa). Intrachain disulfides connect Cys-53-Cys-76, Cys-67-Cys-73, Cys-72-Cys-97, and Cys-85-Cys-104. A Cell attachment site motif is present at residues 89–91; the sequence is RGD. Residues 110 to 111 constitute a propeptide that is removed on maturation; that stretch reads YA.

Belongs to the disintegrin family. Dimeric disintegrin subfamily. Heterodimer with piscivostatin-beta; disulfide-linked. Expressed by the venom gland.

The protein resides in the secreted. Functionally, inhibits fibrinogen interaction with platelets. Acts by binding to alpha-IIb/beta-3 (ITGA2B/ITGB3) on the platelet surface and inhibits both ADP-induced platelet aggregation and platelet aggregate dissociation in human platelet-rich plasma. In Agkistrodon piscivorus piscivorus (Eastern cottonmouth), this protein is Disintegrin piscivostatin-alpha.